The following is a 132-amino-acid chain: Acid shock protein (132 aa).

Residues 1–21 form the signal peptide; sequence MKKVLALIVAATMGLSSVAFA. Residues 22 to 69 constitute a propeptide that is removed on maturation; the sequence is AETTAAATAAPAATSTTAAPAVEKAAPAKATHHKKHKATKQTTEQKAQ. Residues 30 to 50 are compositionally biased toward low complexity; it reads AAPAATSTTAAPAVEKAAPAK. The interval 30–132 is disordered; the sequence is AAPAATSTTA…AKKSATAPAA (103 aa). A compositionally biased stretch (basic residues) spans 51–60; that stretch reads ATHHKKHKAT. Residues 61–99 are compositionally biased toward low complexity; it reads KQTTEQKAQAAKKAVKKAPAQKAQAAKKAVKKAPVQKAQ. Over residues 100-124 the composition is skewed to basic residues; sequence AAKKHVKKAPAQKAQAAKKHHKTAK.

It belongs to the Asr family. Post-translationally, proteolytic processing gives rise to the active protein.

Its subcellular location is the periplasm. Its function is as follows. Required for growth and/or survival at acidic conditions. The sequence is that of Acid shock protein from Yersinia enterocolitica serotype O:8 / biotype 1B (strain NCTC 13174 / 8081).